A 757-amino-acid polypeptide reads, in one-letter code: RNA-directed RNA polymerase catalytic subunit (757 aa).

The disordered stretch occupies residues 52–82; that stretch reads RGKWTTNTETGAPQLNPIDGPLPEDNEPSGY. Polar residues predominate over residues 55–64; that stretch reads WTTNTETGAP. Short sequence motifs (nuclear localization signal) lie at residues 187-195 and 203-216; these read RKRRVRDNM and RTIGKKKQRLNKRS. Residues 249 to 256 are promoter-binding site; sequence RGFVYFVE. Residues 286-483 form the RdRp catalytic domain; sequence VRKMMTNSQD…GINMSKKKSY (198 aa).

Belongs to the influenza viruses polymerase PB1 family. As to quaternary structure, influenza RNA polymerase is composed of three subunits: PB1, PB2 and PA. Interacts (via N-terminus) with PA (via C-terminus). Interacts (via C-terminus) with PB2 (via N-terminus); this interaction is essential for transcription initiation. In terms of processing, phosphorylated by host PRKCA.

It localises to the host nucleus. The protein localises to the host cytoplasm. It carries out the reaction RNA(n) + a ribonucleoside 5'-triphosphate = RNA(n+1) + diphosphate. RNA-dependent RNA polymerase which is responsible for replication and transcription of virus RNA segments. The transcription of viral mRNAs occurs by a unique mechanism called cap-snatching. 5' methylated caps of cellular mRNAs are cleaved after 10-13 nucleotides by PA. In turn, these short capped RNAs are used as primers by PB1 for transcription of viral mRNAs. During virus replication, PB1 initiates RNA synthesis and copy vRNA into complementary RNA (cRNA) which in turn serves as a template for the production of more vRNAs. This Aves protein is RNA-directed RNA polymerase catalytic subunit.